A 443-amino-acid chain; its full sequence is Phosphoglucosamine mutase (443 aa).

The Phosphoserine intermediate role is filled by serine 100. Mg(2+) contacts are provided by serine 100, aspartate 239, aspartate 241, and aspartate 243. At serine 100 the chain carries Phosphoserine.

It belongs to the phosphohexose mutase family. The cofactor is Mg(2+). Activated by phosphorylation.

The catalysed reaction is alpha-D-glucosamine 1-phosphate = D-glucosamine 6-phosphate. In terms of biological role, catalyzes the conversion of glucosamine-6-phosphate to glucosamine-1-phosphate. The protein is Phosphoglucosamine mutase of Shewanella loihica (strain ATCC BAA-1088 / PV-4).